We begin with the raw amino-acid sequence, 152 residues long: MSTLVTCSLPGAVTTHASTRRFGGSQFQTSQASCISFKREVSAKAVLRSVRCNATQTQSAQRKSSTATVKRSDPKGKTQGPKLDDGSGGFPPFRFGKGGGGGGGGGGGSNYFGGFLLFTCVLLLDYLKEFEKNLIARRQRAGYDANNDMFQQ.

A mitochondrion-targeting transit peptide spans 1–52; that stretch reads MSTLVTCSLPGAVTTHASTRRFGGSQFQTSQASCISFKREVSAKAVLRSVRC. Positions 52 to 69 are enriched in polar residues; it reads CNATQTQSAQRKSSTATV. Residues 52–101 form a disordered region; that stretch reads CNATQTQSAQRKSSTATVKRSDPKGKTQGPKLDDGSGGFPPFRFGKGGGG.

The protein resides in the mitochondrion. Non-functional allele of the RF2 fertility restorer of rice varieties with LD-type cytoplasmic male sterility (CMS). Non-functional RF2 alleles are found in japonica cultivars Taichung 65 and Nipponbare (AC F1SZ44), and is due to the presence of Thr-78 which replaces Ile-78 in the functional allele. Functional allele is found in the japonica cultivars Fukuyama and Owarihatamochi (AC F1SZ42), and indica cultivar Kasalath (AC F1SZ41). The polypeptide is Protein FERTILITY RESTORER RF2, mitochondrial (Oryza sativa subsp. japonica (Rice)).